Consider the following 556-residue polypeptide: Arginine--tRNA ligase (556 aa).

Residues 132-142 (VNPTGDLHLGH) carry the 'HIGH' region motif.

The protein belongs to the class-I aminoacyl-tRNA synthetase family. In terms of assembly, monomer.

It is found in the cytoplasm. The enzyme catalyses tRNA(Arg) + L-arginine + ATP = L-arginyl-tRNA(Arg) + AMP + diphosphate. This Oceanobacillus iheyensis (strain DSM 14371 / CIP 107618 / JCM 11309 / KCTC 3954 / HTE831) protein is Arginine--tRNA ligase.